A 142-amino-acid chain; its full sequence is Ribonuclease VapC44 (142 aa).

A PINc domain is found at 4-126; the sequence is LLDVNVLLAL…GRFVTFDQSI (123 aa). Mg(2+) contacts are provided by Asp-6 and Asp-105.

Belongs to the PINc/VapC protein family. The cofactor is Mg(2+).

Toxic component of a type II toxin-antitoxin (TA) system. An RNase. Its cognate antitoxin is VapB44. This chain is Ribonuclease VapC44, found in Mycobacterium tuberculosis (strain CDC 1551 / Oshkosh).